Consider the following 128-residue polypeptide: MGLMWGLFSVIIASAAQLSLGFAASHLPPMTHLWDFIAALLAFGLDARILLLGLLGYLLSVFCWYKTLHKLALSKAYALLSMSYVLVWIASMVLPGWEGTFSLKALLGVACIMSGLMLIFLPTTKQRY.

Topologically, residues 1–2 (MG) are cytoplasmic. Residues 3–23 (LMWGLFSVIIASAAQLSLGFA) traverse the membrane as a helical segment. Residues 24-35 (ASHLPPMTHLWD) are Periplasmic-facing. The chain crosses the membrane as a helical span at residues 36-56 (FIAALLAFGLDARILLLGLLG). Topologically, residues 57–76 (YLLSVFCWYKTLHKLALSKA) are cytoplasmic. Residues 77–97 (YALLSMSYVLVWIASMVLPGW) form a helical membrane-spanning segment. At 98 to 100 (EGT) the chain is on the periplasmic side. Residues 101 to 121 (FSLKALLGVACIMSGLMLIFL) form a helical membrane-spanning segment. Over 122–128 (PTTKQRY) the chain is Cytoplasmic.

The protein belongs to the ArnF family. Heterodimer of ArnE and ArnF.

The protein localises to the cell inner membrane. Its pathway is bacterial outer membrane biogenesis; lipopolysaccharide biosynthesis. In terms of biological role, translocates 4-amino-4-deoxy-L-arabinose-phosphoundecaprenol (alpha-L-Ara4N-phosphoundecaprenol) from the cytoplasmic to the periplasmic side of the inner membrane. The protein is Probable 4-amino-4-deoxy-L-arabinose-phosphoundecaprenol flippase subunit ArnF of Escherichia coli O127:H6 (strain E2348/69 / EPEC).